The following is a 1531-amino-acid chain: Multidrug resistance-associated protein 1 (1531 aa).

The Extracellular segment spans residues methionine 1–phenylalanine 33. Residues asparagine 19 and asparagine 23 are each glycosylated (N-linked (GlcNAc...) asparagine). The helical transmembrane segment at glutamine 34–phenylalanine 54 threads the bilayer. At leucine 55–lysine 74 the chain is on the cytoplasmic side. A helical membrane pass occupies residues threonine 75–glutamate 95. At arginine 96–isoleucine 100 the chain is on the extracellular side. A helical transmembrane segment spans residues phenylalanine 101–threonine 121. Topologically, residues phenylalanine 122–glutamine 133 are cytoplasmic. A helical membrane pass occupies residues serine 134–arginine 154. Residues serine 155–aspartate 172 are Extracellular-facing. A helical transmembrane segment spans residues isoleucine 173–aspartate 193. At arginine 194 to valine 316 the chain is on the cytoplasmic side. A Phosphotyrosine modification is found at tyrosine 277. The residue at position 289 (serine 289) is a Phosphoserine. Residues leucine 317–leucine 337 traverse the membrane as a helical segment. Residues phenylalanine 325–glutamine 608 form the ABC transmembrane type-1 1 domain. The Extracellular segment spans residues methionine 338–glycine 363. A helical transmembrane segment spans residues tyrosine 364–tyrosine 384. At phenylalanine 385–tyrosine 440 the chain is on the cytoplasmic side. The chain crosses the membrane as a helical span at residues isoleucine 441–asparagine 461. The Extracellular segment spans residues leucine 462–proline 464. Residues serine 465–methionine 485 form a helical membrane-spanning segment. Residues lysine 486–alanine 547 are Cytoplasmic-facing. N6-succinyllysine is present on lysine 503. The chain crosses the membrane as a helical span at residues valine 548–tyrosine 568. The Extracellular portion of the chain corresponds to valine 569–asparagine 590. The helical transmembrane segment at isoleucine 591 to valine 611 threads the bilayer. Residues serine 612 to methionine 967 lie on the Cytoplasmic side of the membrane. In terms of domain architecture, ABC transporter 1 spans isoleucine 644 to threonine 868. ATP contacts are provided by residues tryptophan 653, glycine 678 to serine 685, and glutamine 713. A phosphoserine mark is found at serine 905, serine 915, and serine 930. A helical transmembrane segment spans residues lysine 968–serine 988. An ABC transmembrane type-1 2 domain is found at serine 975–threonine 1256. Residues alanine 989 to serine 1025 are Extracellular-facing. N-linked (GlcNAc...) asparagine glycosylation occurs at asparagine 1006. A helical transmembrane segment spans residues glutamine 1026 to arginine 1046. Residues cysteine 1047–glutamate 1089 lie on the Cytoplasmic side of the membrane. A helical transmembrane segment spans residues valine 1090–leucine 1110. Position 1111 (alanine 1111) is a topological domain, extracellular. A helical transmembrane segment spans residues threonine 1112–phenylalanine 1132. At tyrosine 1133–leucine 1203 the chain is on the cytoplasmic side. The chain crosses the membrane as a helical span at residues glutamate 1204 to serine 1224. Topologically, residues leucine 1225 to serine 1226 are extracellular. The helical transmembrane segment at alanine 1227–leucine 1247 threads the bilayer. At valine 1248–valine 1531 the chain is on the cytoplasmic side. The region spanning valine 1293–aspartate 1527 is the ABC transporter 2 domain. Glycine 1327–serine 1334 lines the ATP pocket.

Belongs to the ABC transporter superfamily. ABCC family. Conjugate transporter (TC 3.A.1.208) subfamily. In terms of assembly, (Microbial infection) Interacts with human cytomegalovirus protein UL138; this interaction mediates MRP1 degradation via the lysosome. Lung, testis and peripheral blood mononuclear cells.

It localises to the cell membrane. The protein resides in the basolateral cell membrane. It carries out the reaction ATP + H2O + xenobioticSide 1 = ADP + phosphate + xenobioticSide 2.. The enzyme catalyses an S-substituted glutathione(in) + ATP + H2O = an S-substituted glutathione(out) + ADP + phosphate + H(+). The catalysed reaction is sphing-4-enine 1-phosphate(in) + ATP + H2O = sphing-4-enine 1-phosphate(out) + ADP + phosphate + H(+). It catalyses the reaction leukotriene C4(in) + ATP + H2O = leukotriene C4(out) + ADP + phosphate + H(+). It carries out the reaction 17beta-estradiol 17-O-(beta-D-glucuronate)(in) + ATP + H2O = 17beta-estradiol 17-O-(beta-D-glucuronate)(out) + ADP + phosphate + H(+). The enzyme catalyses daunorubicin(in) + ATP + H2O = daunorubicin(out) + ADP + phosphate + H(+). The catalysed reaction is vincristine(in) + ATP + H2O = vincristine(out) + ADP + phosphate + H(+). It catalyses the reaction 2',3'-cGAMP(in) + ATP + H2O = 2',3'-cGAMP(out) + ADP + phosphate + H(+). It carries out the reaction S-[(2E,6E,10E)-geranylgeranyl]-L-glutathione(in) + ATP + H2O = S-[(2E,6E,10E)-geranylgeranyl]-L-glutathione(out) + ADP + phosphate + H(+). The enzyme catalyses prostaglandin A2-S-(R)-glutathione(in) + ATP + H2O = prostaglandin A2-S-(R)-glutathione(out) + ADP + phosphate + H(+). The catalysed reaction is prostaglandin A2-S-(S)-glutathione(in) + ATP + H2O = prostaglandin A2-S-(S)-glutathione(out) + ADP + phosphate + H(+). Its activity is regulated as follows. MK 571 inhibits sphingosine 1-phosphate and leukotriene C4 export. Mediates export of organic anions and drugs from the cytoplasm. Mediates ATP-dependent transport of glutathione and glutathione conjugates, leukotriene C4, estradiol-17-beta-o-glucuronide, methotrexate, antiviral drugs and other xenobiotics. Confers resistance to anticancer drugs by decreasing accumulation of drug in cells, and by mediating ATP- and GSH-dependent drug export. Hydrolyzes ATP with low efficiency. Catalyzes the export of sphingosine 1-phosphate from mast cells independently of their degranulation. Participates in inflammatory response by allowing export of leukotriene C4 from leukotriene C4-synthesizing cells. Mediates ATP-dependent, GSH-independent cyclic GMP-AMP (cGAMP) export. Thus, by limiting intracellular cGAMP concentrations negatively regulates the cGAS-STING pathway. Exports S-geranylgeranyl-glutathione (GGG) in lymphoid cells and stromal compartments of lymphoid organs. ABCC1 (via extracellular transport) with GGT5 (via GGG catabolism) establish GGG gradients within lymphoid tissues to position P2RY8-positive lymphocytes at germinal centers in lymphoid follicles and restrict their chemotactic transmigration from blood vessels to the bone marrow parenchyma. Mediates basolateral export of GSH-conjugated R- and S-prostaglandin A2 diastereomers in polarized epithelial cells. The chain is Multidrug resistance-associated protein 1 from Homo sapiens (Human).